The primary structure comprises 397 residues: Mannan endo-1,4-beta-mannosidase 1 (397 aa).

Residues 1–23 (MSYARRSCICGLFLLFLALVCEA) form the signal peptide. Substrate is bound by residues Trp83 and Asn198. Glu199 functions as the Proton donor in the catalytic mechanism. Tyr276 contacts substrate. Glu316 acts as the Nucleophile in catalysis. Trp354 serves as a coordination point for substrate.

It belongs to the glycosyl hydrolase 5 (cellulase A) family.

The protein resides in the secreted. The catalysed reaction is Random hydrolysis of (1-&gt;4)-beta-D-mannosidic linkages in mannans, galactomannans and glucomannans.. This Solanum lycopersicum (Tomato) protein is Mannan endo-1,4-beta-mannosidase 1 (MAN1).